The following is a 143-amino-acid chain: Regulator of ribonuclease activity B (143 aa).

Positions 113 to 143 are disordered; sequence EDPNAEEDEYGDDGEFFDDEDEADFNNAKVH. Residues 115-136 show a composition bias toward acidic residues; the sequence is PNAEEDEYGDDGEFFDDEDEAD.

Belongs to the RraB family. Interacts with the C-terminal region of Rne.

The protein localises to the cytoplasm. Functionally, globally modulates RNA abundance by binding to RNase E (Rne) and regulating its endonucleolytic activity. Can modulate Rne action in a substrate-dependent manner by altering the composition of the degradosome. The protein is Regulator of ribonuclease activity B of Haemophilus ducreyi (strain 35000HP / ATCC 700724).